The chain runs to 81 residues: Costars family protein ABRACL (81 aa).

N-acetylmethionine is present on M1.

Belongs to the costars family.

This is Costars family protein ABRACL (ABRACL) from Bos taurus (Bovine).